A 176-amino-acid chain; its full sequence is Deoxyuridine 5'-triphosphate nucleotidohydrolase (176 aa).

Substrate is bound by residues 67-69 (RSG), Asn80, 84-86 (TVD), and Lys94. The disordered stretch occupies residues 141–176 (GGFGSTGGHASVDGAEGGITHGGNSYASVVSDREGQ).

This sequence belongs to the dUTPase family. Mg(2+) serves as cofactor.

The enzyme catalyses dUTP + H2O = dUMP + diphosphate + H(+). Its pathway is pyrimidine metabolism; dUMP biosynthesis; dUMP from dCTP (dUTP route): step 2/2. Functionally, this enzyme is involved in nucleotide metabolism: it produces dUMP, the immediate precursor of thymidine nucleotides and it decreases the intracellular concentration of dUTP so that uracil cannot be incorporated into DNA. This chain is Deoxyuridine 5'-triphosphate nucleotidohydrolase, found in Streptomyces griseus subsp. griseus (strain JCM 4626 / CBS 651.72 / NBRC 13350 / KCC S-0626 / ISP 5235).